The primary structure comprises 120 residues: Large ribosomal subunit protein bL17 (120 aa).

Belongs to the bacterial ribosomal protein bL17 family. Part of the 50S ribosomal subunit. Contacts protein L32.

In Mesomycoplasma hyopneumoniae (strain 7448) (Mycoplasma hyopneumoniae), this protein is Large ribosomal subunit protein bL17.